The following is a 426-amino-acid chain: Tol-Pal system protein TolB (426 aa).

A signal peptide spans 1–25 (MNILLSRFRLLLAAALAALSWGAQA).

It belongs to the TolB family. The Tol-Pal system is composed of five core proteins: the inner membrane proteins TolA, TolQ and TolR, the periplasmic protein TolB and the outer membrane protein Pal. They form a network linking the inner and outer membranes and the peptidoglycan layer.

It is found in the periplasm. In terms of biological role, part of the Tol-Pal system, which plays a role in outer membrane invagination during cell division and is important for maintaining outer membrane integrity. This Aromatoleum aromaticum (strain DSM 19018 / LMG 30748 / EbN1) (Azoarcus sp. (strain EbN1)) protein is Tol-Pal system protein TolB.